The sequence spans 1080 residues: MNSSALNLIQFLESSKIQVPGGLKSVKGILDFDFYDLVKNIGESTSREEEVHIIQNEIIKLKSCFSKEQSKDKKRECLIRMIYCHMLGYDVPFGHIQALNMTQDSEILNKRTGYLTLSLCLPERHELLIMAVNSILKGLNSSNYLEVCSALTAMCKLIDNDTIPAFLQKVLQLLNHQKPIVRKKSVTVLHRFYRLVGDSFLDDDQIIDKLRQSLCDRDPSVMSASICIFLDISEKHSTLKDNNNQINNNNNNNNSNQIKKKNNEEINRSKNLISMLKELVPSFVGILKQVAEGRLPNSYIYHGIHHPWLQINLLKLLSNLGYQDKDSSNHMYTVLLFTMQQSQKFKNNVGFAILYETIKTLTLIHPNLQLIEQCSKNIAIFLKGKHHNLRYFGIKALASIVKVSPKLVLPYQVEVIESLESPDETLKRKSFDLLYKMTNQTNVVPVCSKLIEQLVLSKDQNFKSELISQITNIAEKYSPNDIWYIDTISTVLSILPNENNKDNNNNNNNNNNNNNNYQFAYNLIRLVSEEDDIKVKQHISEIYLNNIMISNEQQQQQQQENQNNLQQFSDIYIKIMSWVISEYSNLIVSNNGVIESDIISYLCDLLEKDYQGETKSWIIIGIGKLVAQLGKSLPMLELMTKKFKSSKSLICQQRSSELNEILKNPKSMSLILPLDAYCEDIDFNKIFNKFNDYSNKVGGKQYIPYEKRKNTPLVDISDGSSSHSNEKGLNFQYPPPPDPFNPHHNQQQLYPVHQHQPPSNHQQQQQQQQQQQQQQLQLFPQQPQQPQQLLLLGEDDTINLNNNSLVPVNNDQQLQPHQHQQQQQNQQQQQQNQQQQQQQNPQYPNNQLVTVPDQNAPKPIGLPKPSKVLWTKKGFVGNKQTPPQNATPQQQQQQQQQQTQNTLSQQQIQKHQQTHNNIDPEKEKLAKQLFGGFSENNNRNENSNNTDNNQNNVGITSKLQNKKSNNENNINNNKKESYLEELIDLSPNLISNINITNNSNNNNNNNNNNNNNNNNNNNNNNNNNNNLLLVDVEGDEQKEVKNSSCSSGNSELINLNLDENTTKNINGNLLGDDLEELNKN.

5 HEAT repeats span residues 161 to 198, 201 to 238, 369 to 405, 406 to 443, and 445 to 479; these read DTIPAFLQKVLQLLNHQKPIVRKKSVTVLHRFYRLVGD, LDDDQIIDKLRQSLCDRDPSVMSASICIFLDISEKHST, QLIEQCSKNIAIFLKGKHHNLRYFGIKALASIVKVSP, KLVLPYQVEVIESLESPDETLKRKSFDLLYKMTNQTNV, and PVCSKLIEQLVLSKDQNFKSELISQITNIAEKYSP. Disordered regions lie at residues 711 to 782, 801 to 920, 933 to 973, and 996 to 1027; these read TPLV…FPQQ, NNNS…NIDP, FSEN…INNN, and TNNSNNNNNNNNNNNNNNNNNNNNNNNNNNNL. Low complexity-rich tracts occupy residues 762–782, 801–847, 878–911, 936–952, and 962–972; these read QQQQQQQQQQQQQQLQLFPQQ, NNNS…PNNQ, NKQTPPQNATPQQQQQQQQQQTQNTLSQQQIQKH, NNNRNENSNNTDNNQNN, and KKSNNENNINN.

Belongs to the adaptor complexes large subunit family. As to quaternary structure, may be part of the adaptor protein complex 4 (AP-4), a heterotetramer composed of two large adaptins (epsilon-type subunitand beta-type subunit), a medium adaptin (mu-type subunit) and a small adaptin (sigma-type).

It is found in the golgi apparatus. The protein localises to the trans-Golgi network membrane. Probable component of an adaptor protein complex. Adaptor protein complexes are vesicle coat components involved both in vesicle formation and cargo selection. They control the vesicular transport of proteins in different trafficking pathways. The protein is AP-4 complex subunit epsilon of Dictyostelium discoideum (Social amoeba).